The primary structure comprises 344 residues: uncharacterized protein (344 aa).

An N-terminal signal peptide occupies residues 1-20 (MEIRIMLFILMMMVMPVSYA).

Belongs to the fimbrial protein family.

In terms of biological role, part of the yehABCD fimbrial operon. Could contribute to adhesion to various surfaces in specific environmental niches. This is an uncharacterized protein from Escherichia coli (strain K12).